The sequence spans 72 residues: Protein CYSTEINE-RICH TRANSMEMBRANE MODULE 9 (72 aa).

Positions methionine 1–tyrosine 22 are enriched in polar residues. The interval methionine 1 to glutamate 46 is disordered. A helical membrane pass occupies residues serine 49–cysteine 65.

It belongs to the CYSTM1 family. In terms of assembly, heterodimers. Interacts with WIH1/CYSTM13. In terms of tissue distribution, mostly expressed in roots and flowers and, to a lower extent, in stems, siliques and leaves.

The protein resides in the cell membrane. Its subcellular location is the nucleus. Its function is as follows. Involved in resistance to abiotic stress. This chain is Protein CYSTEINE-RICH TRANSMEMBRANE MODULE 9, found in Arabidopsis thaliana (Mouse-ear cress).